The following is a 270-amino-acid chain: Probable ribosome biogenesis GTPase A (270 aa).

The CP-type G domain occupies 20-174; it reads HDQLKKLSSQ…LSDTPGVFLK (155 aa). GTP is bound by residues 126 to 131 and glycine 170; that span reads NVGKSS.

It belongs to the TRAFAC class YlqF/YawG GTPase family. MTG1 subfamily.

Its subcellular location is the cytoplasm. Its function is as follows. Required for a late step of 50S ribosomal subunit assembly. Has GTPase activity. Binds to the 23S rRNA. This Mycoplasma genitalium (strain ATCC 33530 / DSM 19775 / NCTC 10195 / G37) (Mycoplasmoides genitalium) protein is Probable ribosome biogenesis GTPase A (rbgA).